The following is a 348-amino-acid chain: Isopentenyl-diphosphate delta-isomerase (348 aa).

Position 9-10 (9-10 (RK)) interacts with substrate. Residues 68-70 (AMT), Ser98, and Asn127 each bind FMN. Residue Gln157 participates in substrate binding. Glu158 is a binding site for Mg(2+). FMN is bound by residues Lys188, Ser213, Thr218, and 286–287 (AG).

The protein belongs to the IPP isomerase type 2 family. As to quaternary structure, homooctamer. Dimer of tetramers. Requires FMN as cofactor. It depends on NADPH as a cofactor. Mg(2+) serves as cofactor.

Its subcellular location is the cytoplasm. It carries out the reaction isopentenyl diphosphate = dimethylallyl diphosphate. Involved in the biosynthesis of isoprenoids. Catalyzes the 1,3-allylic rearrangement of the homoallylic substrate isopentenyl (IPP) to its allylic isomer, dimethylallyl diphosphate (DMAPP). The polypeptide is Isopentenyl-diphosphate delta-isomerase (Limosilactobacillus reuteri subsp. reuteri (strain JCM 1112) (Lactobacillus reuteri)).